The sequence spans 392 residues: 2-oxoisovalerate dehydrogenase subunit beta, mitochondrial (392 aa).

Residues 1–50 constitute a mitochondrion transit peptide; the sequence is MAVVAAAAGWLLRLRAAGAEGHWRRLPGAGLARGFLHPAATVEDAAQRRQ. Tyr152 contacts thiamine diphosphate. K(+) contacts are provided by Gly178, Leu180, Thr181, Cys228, and Asp231. At Lys232 the chain carries N6-acetyllysine. Position 233 (Asn233) interacts with K(+). At Lys241 the chain carries N6-acetyllysine.

In terms of assembly, heterotetramer of 2 alpha/BCKDHA and 2 beta chains/BCKDHB that forms the branched-chain alpha-keto acid decarboxylase (E1) component of the BCKD complex. The branched-chain alpha-ketoacid dehydrogenase is a large complex composed of three major building blocks E1, E2 and E3. It is organized around E2, a 24-meric cubic core composed of DBT, to which are associated 6 to 12 copies of E1, and approximately 6 copies of the dehydrogenase E3, a DLD dimer. Requires thiamine diphosphate as cofactor.

The protein localises to the mitochondrion matrix. It carries out the reaction N(6)-[(R)-lipoyl]-L-lysyl-[protein] + 3-methyl-2-oxobutanoate + H(+) = N(6)-[(R)-S(8)-2-methylpropanoyldihydrolipoyl]-L-lysyl-[protein] + CO2. Functionally, together with BCKDHA forms the heterotetrameric E1 subunit of the mitochondrial branched-chain alpha-ketoacid dehydrogenase (BCKD) complex. The BCKD complex catalyzes the multi-step oxidative decarboxylation of alpha-ketoacids derived from the branched-chain amino-acids valine, leucine and isoleucine producing CO2 and acyl-CoA which is subsequently utilized to produce energy. The E1 subunit catalyzes the first step with the decarboxylation of the alpha-ketoacid forming an enzyme-product intermediate. A reductive acylation mediated by the lipoylamide cofactor of E2 extracts the acyl group from the E1 active site for the next step of the reaction. This chain is 2-oxoisovalerate dehydrogenase subunit beta, mitochondrial, found in Homo sapiens (Human).